The following is a 323-amino-acid chain: tRNA U34 carboxymethyltransferase (323 aa).

Residues lysine 91, tryptophan 105, lysine 110, glycine 130, aspartate 152–threonine 154, isoleucine 181–glutamate 182, methionine 196, tyrosine 200, and arginine 315 each bind carboxy-S-adenosyl-L-methionine.

This sequence belongs to the class I-like SAM-binding methyltransferase superfamily. CmoB family. In terms of assembly, homotetramer.

It carries out the reaction carboxy-S-adenosyl-L-methionine + 5-hydroxyuridine(34) in tRNA = 5-carboxymethoxyuridine(34) in tRNA + S-adenosyl-L-homocysteine + H(+). Its function is as follows. Catalyzes carboxymethyl transfer from carboxy-S-adenosyl-L-methionine (Cx-SAM) to 5-hydroxyuridine (ho5U) to form 5-carboxymethoxyuridine (cmo5U) at position 34 in tRNAs. This chain is tRNA U34 carboxymethyltransferase, found in Escherichia coli O8 (strain IAI1).